Reading from the N-terminus, the 225-residue chain is MVSHSELRKLFCSADAVCFDVDSTVIREEGIDELAKFCGVEAAVSEMTRRAMGGALPFKDALTERLALIQPSRDQVQRLLAEHPPHLTPGIRELVSRLQERNVQVFLISGGFRSIVEHVAAKLNIPTTNVFANRLKFYFNGEYAGFDETQPTAESGGKGKVIGFLKEKFHFKKIIMIGDGATDMEACPPADAFIGFGGNVIRQQVKDNAKWYITDFVELLGELEE.

M1 carries the post-translational modification N-acetylmethionine. Residue D20 is the Nucleophile of the active site. 2 residues coordinate Mg(2+): D20 and D22. 20 to 22 (DVD) provides a ligand contact to L-serine. Residue D22 is the Proton donor of the active site. M52 provides a ligand contact to O-phospho-L-serine. G53 is a phosphate binding site. Residues 109 to 111 (SGG) and K158 each bind L-serine. O-phospho-L-serine-binding positions include 109-111 (SGG) and K158. Residue D179 participates in Mg(2+) binding. Position 182 (T182) interacts with O-phospho-L-serine. T182 contacts phosphate.

Belongs to the HAD-like hydrolase superfamily. SerB family. Homodimer. Requires Mg(2+) as cofactor.

Its subcellular location is the cytoplasm. It is found in the cytosol. The enzyme catalyses O-phospho-L-serine + H2O = L-serine + phosphate. The catalysed reaction is O-phospho-D-serine + H2O = D-serine + phosphate. It participates in amino-acid biosynthesis; L-serine biosynthesis; L-serine from 3-phospho-D-glycerate: step 3/3. Functionally, catalyzes the last irreversible step in the biosynthesis of L-serine from carbohydrates, the dephosphorylation of O-phospho-L-serine to L-serine. L-serine can then be used in protein synthesis, to produce other amino acids, in nucleotide metabolism or in glutathione synthesis, or can be racemized to D-serine, a neuromodulator. May also act on O-phospho-D-serine. The sequence is that of Phosphoserine phosphatase from Rattus norvegicus (Rat).